The sequence spans 663 residues: Alpha-1,4-glucan:maltose-1-phosphate maltosyltransferase (663 aa).

A disordered region spans residues 238-266 (IGETNRKGPDDAPEAGPDDPGSPWAIGGF). Residues lysine 244, glutamine 309, and aspartate 344 each contribute to the alpha-maltose 1-phosphate site. Residue aspartate 380 is the Nucleophile of the active site. Asparagine 381 serves as a coordination point for alpha-maltose 1-phosphate. The Proton donor role is filled by glutamate 409. An alpha-maltose 1-phosphate-binding site is contributed by 521 to 522 (KY).

It belongs to the glycosyl hydrolase 13 family. GlgE subfamily. Homodimer.

It catalyses the reaction alpha-maltose 1-phosphate + [(1-&gt;4)-alpha-D-glucosyl](n) = [(1-&gt;4)-alpha-D-glucosyl](n+2) + phosphate. Functionally, maltosyltransferase that uses maltose 1-phosphate (M1P) as the sugar donor to elongate linear or branched alpha-(1-&gt;4)-glucans. Is involved in a branched alpha-glucan biosynthetic pathway from trehalose, together with TreS, Mak and GlgB. The protein is Alpha-1,4-glucan:maltose-1-phosphate maltosyltransferase of Salinibacter ruber (strain DSM 13855 / M31).